Here is a 301-residue protein sequence, read N- to C-terminus: MSTDKTYCGFIAIVGRPNVGKSTLLNKLLGQKISITSRKAQTTRHRIVGIHTEGPYQAIYVDTPGLHMEEKRAINRLMNKAASSSIGDVELVIFVVEGTRWTPDDEMVLNKLRDGKAPVILAVNKVDNVQEKVDLLPHLQFLASQMNFLDIVPISAETGMNVDTIAGIVRKHLPEAIHHFPEDYITDRSQRFMASEIIREKLMRFLGAELPYSVTVEIERFVTNERGGYDINGLILVEREGQKKMVIGNKGAKIKTIGIEARKDMQEMFEAPVHLELWVKVKSGWADDERALRSLGYVDDL.

One can recognise an Era-type G domain in the interval 7–175 (YCGFIAIVGR…AGIVRKHLPE (169 aa)). The G1 stretch occupies residues 15-22 (GRPNVGKS). Residue 15-22 (GRPNVGKS) participates in GTP binding. The G2 stretch occupies residues 41–45 (QTTRH). The tract at residues 62-65 (DTPG) is G3. Residues 62-66 (DTPGL) and 124-127 (NKVD) each bind GTP. Residues 124-127 (NKVD) form a G4 region. The interval 154–156 (ISA) is G5. One can recognise a KH type-2 domain in the interval 206 to 283 (LGAELPYSVT…HLELWVKVKS (78 aa)).

The protein belongs to the TRAFAC class TrmE-Era-EngA-EngB-Septin-like GTPase superfamily. Era GTPase family. Monomer.

It is found in the cytoplasm. The protein resides in the cell inner membrane. An essential GTPase that binds both GDP and GTP, with rapid nucleotide exchange. Plays a role in 16S rRNA processing and 30S ribosomal subunit biogenesis and possibly also in cell cycle regulation and energy metabolism. The sequence is that of GTPase Era from Salmonella heidelberg (strain SL476).